Reading from the N-terminus, the 277-residue chain is Caspase-3 (277 aa).

At Met-1 the chain carries N-acetylmethionine. 2 propeptides span residues 1-9 and 10-28; these read MENTENSVD and SKSI…KSVD. Over residues 1–10 the composition is skewed to polar residues; sequence MENTENSVDS. Residues 1 to 25 form a disordered region; sequence MENTENSVDSKSIKNSEPKIIHGSK. N6-acetyllysine is present on Lys-11. Residues 11–20 are compositionally biased toward basic and acidic residues; that stretch reads KSIKNSEPKI. A Phosphoserine modification is found at Ser-26. Residues His-121 and Cys-163 contribute to the active site. Cys-163 carries the post-translational modification S-nitrosocysteine; in inhibited form.

It belongs to the peptidase C14A family. In terms of assembly, heterotetramer that consists of two anti-parallel arranged heterodimers, each one formed by a 17 kDa (p17) and a 12 kDa (p12) subunit. Interacts with BIRC6/bruce. Post-translationally, cleavage by granzyme B, caspase-6, caspase-8 and caspase-10 generates the two active subunits. Additional processing of the propeptides is likely due to the autocatalytic activity of the activated protease. Active heterodimers between the small subunit of caspase-7 protease and the large subunit of caspase-3 also occur and vice versa. S-nitrosylated on its catalytic site cysteine in unstimulated cell lines and denitrosylated upon activation of the Fas apoptotic pathway, associated with an increase in intracellular caspase activity. Fas therefore activates caspase-3 not only by inducing the cleavage of the caspase zymogen to its active subunits, but also by stimulating the denitrosylation of its active site thiol. In terms of processing, ubiquitinated by BIRC6; this activity is inhibited by DIABLO/SMAC.

It is found in the cytoplasm. It carries out the reaction Strict requirement for an Asp residue at positions P1 and P4. It has a preferred cleavage sequence of Asp-Xaa-Xaa-Asp-|- with a hydrophobic amino-acid residue at P2 and a hydrophilic amino-acid residue at P3, although Val or Ala are also accepted at this position.. Its activity is regulated as follows. Inhibited by BIRC6; following inhibition of BIRC6-caspase binding by DIABLO/SMAC, BIRC6 is subjected to caspase cleavage, leading to an increase in active caspases. Involved in the activation cascade of caspases responsible for apoptosis execution. At the onset of apoptosis, it proteolytically cleaves poly(ADP-ribose) polymerase PARP1 at a '216-Asp-|-Gly-217' bond. Cleaves and activates sterol regulatory element binding proteins (SREBPs) between the basic helix-loop-helix leucine zipper domain and the membrane attachment domain. Cleaves and activates caspase-6, -7 and -9 (CASP6, CASP7 and CASP9, respectively). Cleaves and inactivates interleukin-18 (IL18). Triggers cell adhesion in sympathetic neurons through RET cleavage. Cleaves IL-1 beta between an Asp and an Ala, releasing the mature cytokine which is involved in a variety of inflammatory processes. Cleaves and inhibits serine/threonine-protein kinase AKT1 in response to oxidative stress. Acts as an inhibitor of type I interferon production during virus-induced apoptosis by mediating cleavage of antiviral proteins CGAS, IRF3 and MAVS, thereby preventing cytokine overproduction. Also involved in pyroptosis by mediating cleavage and activation of gasdermin-E (GSDME). Cleaves XRCC4 and phospholipid scramblase proteins XKR4, XKR8 and XKR9, leading to promote phosphatidylserine exposure on apoptotic cell surface. Cleaves BIRC6 following inhibition of BIRC6-caspase binding by DIABLO/SMAC. The protein is Caspase-3 (CASP3) of Saimiri boliviensis boliviensis (Bolivian squirrel monkey).